Here is a 61-residue protein sequence, read N- to C-terminus: TSACCDKCFCTKSNPPICQCRDVGETCHSACKFCICALSYPAQCHCLDQNTFCYDKCDSDS.

Cystine bridges form between Cys-4–Cys-57, Cys-5–Cys-20, Cys-8–Cys-53, Cys-10–Cys-18, Cys-27–Cys-34, Cys-31–Cys-46, and Cys-36–Cys-44.

It belongs to the Bowman-Birk serine protease inhibitor family.

Functionally, strong inhibitor of trypsin with a 1:1 stoichiometry. Weaker inhibitor of chymotrypsin. This is Bowman-Birk type proteinase inhibitor from Erythrina variegata (Indian coral tree).